Consider the following 180-residue polypeptide: Nucleoid-associated protein At4g30620, chloroplastic (180 aa).

The transit peptide at 1-48 (MASTATNTDFFKTLLSPFSNGNAAQRSSRQNIVWLNRKQSGNNNRSLR) directs the protein to the chloroplast. A disordered region spans residues 45–65 (RSLRVNGLFGGGKKDNKEDGQ). Basic and acidic residues predominate over residues 56–65 (GKKDNKEDGQ).

This sequence belongs to the YbaB/EbfC family. In terms of assembly, homodimer. Binds to the translation initiation factors TIF3E1.

It localises to the plastid. Its subcellular location is the chloroplast. Functionally, binds to DNA and alters its conformation. May be involved in regulation of gene expression, nucleoid organization and DNA protection. This chain is Nucleoid-associated protein At4g30620, chloroplastic, found in Arabidopsis thaliana (Mouse-ear cress).